Here is a 336-residue protein sequence, read N- to C-terminus: Abasic site processing protein HMCES (336 aa).

C2 (nucleophile) is an active-site residue. Residue C2 is modified to Thiazolidine linkage to a ring-opened DNA abasic site. The span at 29–38 (QPEWLREGRY) shows a compositional bias: basic and acidic residues. The segment at 29–52 (QPEWLREGRYRPSYNKGPQSSGPV) is disordered. The active site involves E127. The interval 283 to 336 (LKSSQEGSPQKKEDTLPRWKSQFIHSPSPKKSSAGILRQWLGQEGGPPAKKQKA) is disordered.

It belongs to the SOS response-associated peptidase family.

The protein localises to the chromosome. Formation and reversal of DNA-protein cross-link depends on DNA context. Catalyzes formation of the thiazolidine linkage in presence of abasic sites in single-stranded DNA. Mediates the reversal of the thiazolidine cross-link in presence of double stranded DNA. Functionally, sensor of abasic sites in single-stranded DNA (ssDNA) required to preserve genome integrity by promoting error-free repair of abasic sites. Acts as an enzyme that recognizes and binds abasic sites in ssDNA at replication forks and chemically modifies the lesion by forming a covalent cross-link with DNA: forms a stable thiazolidine linkage between a ring-opened abasic site and the alpha-amino and sulfhydryl substituents of its N-terminal catalytic cysteine residue. The HMCES DNA-protein cross-link is then either reversed or degraded. HMCES is able to catalyze the reversal of its thiazolidine cross-link and cycle between a cross-link and a non-cross-linked state depending on DNA context: mediates self-reversal of the thiazolidine cross-link in double stranded DNA, allowing APEX1 to initiate downstream repair of abasic sites. The HMCES DNA-protein cross-link can also be degraded by the SPRTN metalloprotease following unfolding by the BRIP1/FANCJ helicase. Promotes error-free repair of abasic sites by protecting abasic sites from translesion synthesis (TLS) polymerases and endonucleases that are error-prone and would generate mutations and double-strand breaks. Acts as a protease: mediates autocatalytic processing of its N-terminal methionine in order to expose the catalytic cysteine. The HMCES DNA-protein cross-link is then either reversed or degraded. According to a model, the HMCES DNA-protein cross-link. The polypeptide is Abasic site processing protein HMCES (Gallus gallus (Chicken)).